The chain runs to 156 residues: ATP synthase subunit b (156 aa).

Residues 11-31 (AIAFVLFVLFCMKYVWPPIMA) traverse the membrane as a helical segment.

Belongs to the ATPase B chain family. In terms of assembly, F-type ATPases have 2 components, F(1) - the catalytic core - and F(0) - the membrane proton channel. F(1) has five subunits: alpha(3), beta(3), gamma(1), delta(1), epsilon(1). F(0) has three main subunits: a(1), b(2) and c(10-14). The alpha and beta chains form an alternating ring which encloses part of the gamma chain. F(1) is attached to F(0) by a central stalk formed by the gamma and epsilon chains, while a peripheral stalk is formed by the delta and b chains.

The protein localises to the cell inner membrane. Its function is as follows. F(1)F(0) ATP synthase produces ATP from ADP in the presence of a proton or sodium gradient. F-type ATPases consist of two structural domains, F(1) containing the extramembraneous catalytic core and F(0) containing the membrane proton channel, linked together by a central stalk and a peripheral stalk. During catalysis, ATP synthesis in the catalytic domain of F(1) is coupled via a rotary mechanism of the central stalk subunits to proton translocation. In terms of biological role, component of the F(0) channel, it forms part of the peripheral stalk, linking F(1) to F(0). The sequence is that of ATP synthase subunit b from Cronobacter sakazakii (strain ATCC BAA-894) (Enterobacter sakazakii).